A 341-amino-acid chain; its full sequence is Peroxisomal membrane protein import receptor PEX19 (341 aa).

Positions 1 to 18 (MNENEYDNFDDLDDLLDE) are enriched in acidic residues. 5 disordered regions span residues 1-26 (MNENEYDNFDDLDDLLDEDPTKLDEQ), 39-66 (DSENKEKNAESKDSDGVQVANESEEDPE), 109-141 (VPRQQMEQGSSSLKSNSTDKGTLNGSNPGFKNI), 293-312 (LGDSPIRSANSPLKHGNEEE), and 318-341 (LEIDGNDPNLGNLDKELTDGCKQQ). The segment covering 39–53 (DSENKEKNAESKDSD) has biased composition (basic and acidic residues). Serine 61 carries the phosphoserine modification. Residues 113 to 141 (QMEQGSSSLKSNSTDKGTLNGSNPGFKNI) are compositionally biased toward polar residues. Phosphoserine is present on serine 303. Residues 330-341 (LDKELTDGCKQQ) show a composition bias toward basic and acidic residues. Cysteine methyl ester is present on cysteine 338. A lipid anchor (S-farnesyl cysteine) is attached at cysteine 338. Residues 339 to 341 (KQQ) constitute a propeptide, removed in mature form.

The protein belongs to the peroxin-19 family. As to quaternary structure, interacts (farnesylated) with PEX3; farnesylation is required for this interaction. Interacts with PEX2, PEX5, PEX10, PEX11, PEX12, PEX13, PEX14, PEX17, PEX22, PEX25, PEX30 and PEX32; the interaction requires well-defined PEX19-binding sites within the peroxisomal membrane protein targeting signal (mPTS) of the PMPs and is independent on the presence of PEX3. Interacts with VPS1.

The protein resides in the cytoplasm. It is found in the peroxisome membrane. The protein localises to the endoplasmic reticulum membrane. Its function is as follows. Required for proper post-translational import and stabilization of peroxisomal membrane proteins (PMPs). Acts as a cytosolic import receptor for PMPs and delivers them to the docking factor PEX3 at the peroxisomal membrane for subsequent insertion into the membrane. Acts as a chaperone in stabilizing or maintaining PMPs in the lipid bilayer. Directs PEX17, a peripheral component of the peroxisomal matrix protein translocation machinery, to peroxisomes. Stabilizes VPS1, a protein required for peroxisomal fission, at the peroxisomal membrane. Also acts in conjunction with PEX3 in the formation of peroxisomes from preperoxisomal compartments at the endoplasmic reticulum during de novo peroxisome synthesis, probably via the import of additional PMPs. This Saccharomyces cerevisiae (strain YJM789) (Baker's yeast) protein is Peroxisomal membrane protein import receptor PEX19 (PEX19).